The sequence spans 242 residues: Tyrosine recombinase XerD-like (242 aa).

Positions 1-71 constitute a Core-binding (CB) domain; sequence MKEAIDQFIQ…AVNQFLYFLY (71 aa). The region spanning 90 to 242 is the Tyr recombinase domain; sequence ENSSQGSLLD…KSITTLEKYR (153 aa). Residues Lys-148 and Arg-209 contribute to the active site. Tyr-241 acts as the O-(3'-phospho-DNA)-tyrosine intermediate in catalysis.

Belongs to the 'phage' integrase family. XerD-like subfamily.

It localises to the cytoplasm. Its function is as follows. Putative tyrosine recombinase. Not involved in the cutting and rejoining of the recombining DNA molecules on dif(SL) site. The protein is Tyrosine recombinase XerD-like of Streptococcus gordonii (strain Challis / ATCC 35105 / BCRC 15272 / CH1 / DL1 / V288).